The chain runs to 608 residues: Membrane protein insertase YidC (608 aa).

Residues 8-28 (LLLATALSFLVILGWYFFFPP) form a helical membrane-spanning segment. The tract at residues 33 to 61 (PQPATEVTETAPQGDTTAPAAAPSAGAAT) is disordered. A run of 5 helical transmembrane segments spans residues 378–398 (MGVA…PLAY), 448–468 (LPIL…FVTL), 482–502 (LSVP…WAAP), 506–526 (SLLS…SMWV), and 542–562 (IFAW…SGLV).

Belongs to the OXA1/ALB3/YidC family. Type 1 subfamily. Interacts with the Sec translocase complex via SecD. Specifically interacts with transmembrane segments of nascent integral membrane proteins during membrane integration.

It is found in the cell inner membrane. Its function is as follows. Required for the insertion and/or proper folding and/or complex formation of integral membrane proteins into the membrane. Involved in integration of membrane proteins that insert both dependently and independently of the Sec translocase complex, as well as at least some lipoproteins. Aids folding of multispanning membrane proteins. In Ruegeria sp. (strain TM1040) (Silicibacter sp.), this protein is Membrane protein insertase YidC.